The chain runs to 196 residues: Transcription repressor OFP10 (196 aa).

Residues Met100 to His159 form the OVATE domain.

As to expression, expressed in roots, cauline leaves, shoots, stems, flower buds and siliques.

Its subcellular location is the nucleus. Functionally, transcriptional repressor that may regulate multiple aspects of plant growth and development through the regulation of BEL1-LIKE (BLH) and KNOX TALE (KNAT) homeodomain transcription factors. The sequence is that of Transcription repressor OFP10 (OFP10) from Arabidopsis thaliana (Mouse-ear cress).